The sequence spans 273 residues: 1,4-dihydroxy-2-naphthoyl-CoA synthase (273 aa).

Substrate-binding positions include Arg34, Ser73–Gln77, Tyr85, Tyr117–Gly121, Thr143, Ser149, Tyr246, and Lys261. Gln142–Gly144 lines the hydrogencarbonate pocket. Residues Gly254–Asp265 are compositionally biased toward basic and acidic residues. Positions Gly254–Pro273 are disordered.

Belongs to the enoyl-CoA hydratase/isomerase family. MenB subfamily. It depends on hydrogencarbonate as a cofactor.

It carries out the reaction 2-succinylbenzoyl-CoA + H(+) = 1,4-dihydroxy-2-naphthoyl-CoA + H2O. The protein operates within quinol/quinone metabolism; 1,4-dihydroxy-2-naphthoate biosynthesis; 1,4-dihydroxy-2-naphthoate from chorismate: step 6/7. Its pathway is quinol/quinone metabolism; menaquinone biosynthesis. Converts o-succinylbenzoyl-CoA (OSB-CoA) to 1,4-dihydroxy-2-naphthoyl-CoA (DHNA-CoA). The protein is 1,4-dihydroxy-2-naphthoyl-CoA synthase of Staphylococcus aureus (strain Mu50 / ATCC 700699).